The chain runs to 96 residues: Large ribosomal subunit protein uL23 (96 aa).

Belongs to the universal ribosomal protein uL23 family. Part of the 50S ribosomal subunit. Contacts protein L29, and trigger factor when it is bound to the ribosome.

Its function is as follows. One of the early assembly proteins it binds 23S rRNA. One of the proteins that surrounds the polypeptide exit tunnel on the outside of the ribosome. Forms the main docking site for trigger factor binding to the ribosome. In Solidesulfovibrio magneticus (strain ATCC 700980 / DSM 13731 / RS-1) (Desulfovibrio magneticus), this protein is Large ribosomal subunit protein uL23.